A 103-amino-acid chain; its full sequence is Large ribosomal subunit protein bL21 (103 aa).

This sequence belongs to the bacterial ribosomal protein bL21 family. In terms of assembly, part of the 50S ribosomal subunit. Contacts protein L20.

In terms of biological role, this protein binds to 23S rRNA in the presence of protein L20. This is Large ribosomal subunit protein bL21 from Cupriavidus metallidurans (strain ATCC 43123 / DSM 2839 / NBRC 102507 / CH34) (Ralstonia metallidurans).